We begin with the raw amino-acid sequence, 154 residues long: Fluoride-specific ion channel FluC 1 (154 aa).

Transmembrane regions (helical) follow at residues valine 28–leucine 48, tryptophan 59–isoleucine 79, proline 91–serine 111, and leucine 124–alanine 144. Na(+) contacts are provided by glycine 99 and threonine 102.

Belongs to the fluoride channel Fluc/FEX (TC 1.A.43) family.

It is found in the cell membrane. It carries out the reaction fluoride(in) = fluoride(out). Its activity is regulated as follows. Na(+) is not transported, but it plays an essential structural role and its presence is essential for fluoride channel function. Functionally, fluoride-specific ion channel. Important for reducing fluoride concentration in the cell, thus reducing its toxicity. The polypeptide is Fluoride-specific ion channel FluC 1 (Streptomyces coelicolor (strain ATCC BAA-471 / A3(2) / M145)).